The sequence spans 383 residues: Hydroxymethylglutaryl-CoA synthase (383 aa).

Asp29 contacts (3S)-3-hydroxy-3-methylglutaryl-CoA. The active-site Proton donor/acceptor is Glu79. Cys111, Thr152, Ser201, His233, Lys242, Asn275, and Ser308 together coordinate (3S)-3-hydroxy-3-methylglutaryl-CoA. The active-site Acyl-thioester intermediate is the Cys111. His233 (proton donor/acceptor) is an active-site residue.

Belongs to the thiolase-like superfamily. HMG-CoA synthase family. As to quaternary structure, homodimer.

It catalyses the reaction acetoacetyl-CoA + acetyl-CoA + H2O = (3S)-3-hydroxy-3-methylglutaryl-CoA + CoA + H(+). Its pathway is metabolic intermediate biosynthesis; (R)-mevalonate biosynthesis; (R)-mevalonate from acetyl-CoA: step 2/3. Its activity is regulated as follows. Is sensitive to feedback substrate inhibition by acetoacetyl-CoA. Is inactivated by hymeglusin, which also blocks the growth of E.faecalis, indicating the critical role that the mevalonate pathway plays in isoprenoid biosynthesis. Catalyzes the condensation of acetyl-CoA with acetoacetyl-CoA to form 3-hydroxy-3-methylglutaryl-CoA (HMG-CoA). Functions in the mevalonate (MVA) pathway leading to isopentenyl diphosphate (IPP), a key precursor for the biosynthesis of isoprenoid compounds. The protein is Hydroxymethylglutaryl-CoA synthase (mvaS) of Enterococcus faecalis (Streptococcus faecalis).